The following is a 421-amino-acid chain: Probable N-acetylgalactosaminyltransferase 8 (421 aa).

Residues 1 to 3 (MRR) lie on the Cytoplasmic side of the membrane. Residues 4–24 (HVVLSIFVFAGIVFAAEEAEK) traverse the membrane as a helical; Signal-anchor for type II membrane protein segment. At 25 to 421 (LPKCEHVDPY…ELEPKVHDEL (397 aa)) the chain is on the lumenal side. 2 N-linked (GlcNAc...) asparagine glycosylation sites follow: N52 and N58. 2 cysteine pairs are disulfide-bonded: C98–C331 and C322–C399. A catalytic subdomain A region spans residues 106-219 (SYSTSVVVIH…ERWLEPLLQP (114 aa)). Residues D147 and R180 each coordinate substrate. D203 is a Mn(2+) binding site. S204 contacts substrate. Position 205 (H205) interacts with Mn(2+). Residues 277-339 (PFNSPAMPGG…PCSRVGHVFR (63 aa)) form a catalytic subdomain B region. Substrate is bound at residue W308. Mn(2+) is bound at residue H336. Substrate-binding residues include R339 and Y344. The Prevents secretion from ER signature appears at 418-421 (HDEL).

This sequence belongs to the glycosyltransferase 2 family. GalNAc-T subfamily. Mn(2+) is required as a cofactor.

Its subcellular location is the golgi apparatus membrane. Its pathway is protein modification; protein glycosylation. Functionally, potential glycopeptide transferase involved in O-linked oligosaccharide biosynthesis. In contrast to other members of the family, it does not act as a peptide transferase that transfers GalNAc onto serine or threonine residue on peptides that have been tested. Some peptide transferase activity is however not excluded, considering that its appropriate peptide substrate may remain unidentified. In Caenorhabditis elegans, this protein is Probable N-acetylgalactosaminyltransferase 8 (gly-8).